The following is a 276-amino-acid chain: Microtubule-associated protein RP/EB family member 1A (276 aa).

The Calponin-homology (CH) domain occupies 13–115 (FVGRNEILTW…FLQWLKRFCD (103 aa)). Positions 124-172 (ENYNPVERRSRNGKERSVKGSNKIPKSLQTNNNHPPPNSSSVGLSKASG) are disordered. Positions 129-141 (VERRSRNGKERSV) are enriched in basic and acidic residues. Over residues 162–172 (SSSVGLSKASG) the composition is skewed to low complexity. An EB1 C-terminal domain is found at 173 to 243 (PKSAKAAEVQ…LYATDANESA (71 aa)). Positions 252 to 276 (NQSLGVEDDEAEGNGEQLEEEKTQA) are disordered. Acidic residues predominate over residues 257-270 (VEDDEAEGNGEQLE).

This sequence belongs to the MAPRE family. Homodimer and heterodimer with EB1B. Interacts with tobamovirus movement protein. As to expression, highly expressed in guard cells of leaf stomata, pollen grains and pollen tubes. Expressed in young roots.

It is found in the cytoplasm. It localises to the cytoskeleton. Its subcellular location is the spindle pole. The protein localises to the phragmoplast. Its function is as follows. Binds to the plus end of microtubules and regulates the dynamics of the microtubule cytoskeleton. May be involved in anchoring microtubules to their nucleation sites and/or functioning as a reservoir for distribution to the growing end. In plants, microtubule minus ends are not necessarily severed from the nucleation site and transported to the plus end of a microtubule as part of the recycling process. May play a role in endomembrane organization during polarized growth of plant cells. Interacts with the tobamovirus movement protein (MP) and may play a role in the association of MP with the microtubule system during infection. The sequence is that of Microtubule-associated protein RP/EB family member 1A (EB1A) from Arabidopsis thaliana (Mouse-ear cress).